We begin with the raw amino-acid sequence, 342 residues long: N-acetyl-gamma-glutamyl-phosphate reductase (342 aa).

The active site involves C146.

It belongs to the NAGSA dehydrogenase family. Type 1 subfamily.

The protein resides in the cytoplasm. It catalyses the reaction N-acetyl-L-glutamate 5-semialdehyde + phosphate + NADP(+) = N-acetyl-L-glutamyl 5-phosphate + NADPH + H(+). The protein operates within amino-acid biosynthesis; L-arginine biosynthesis; N(2)-acetyl-L-ornithine from L-glutamate: step 3/4. Its function is as follows. Catalyzes the NADPH-dependent reduction of N-acetyl-5-glutamyl phosphate to yield N-acetyl-L-glutamate 5-semialdehyde. The protein is N-acetyl-gamma-glutamyl-phosphate reductase of Streptomyces coelicolor (strain ATCC BAA-471 / A3(2) / M145).